We begin with the raw amino-acid sequence, 376 residues long: Transcriptional regulator STP4 (376 aa).

Disordered stretches follow at residues 25–58 (QNYC…PHAS), 89–122 (SSNS…SNSS), and 137–210 (VNCI…NWKP). Composition is skewed to low complexity over residues 32-50 (SPSP…TSPP) and 89-103 (SSNS…YSPT). 2 stretches are compositionally biased toward polar residues: residues 146–183 (PRST…LSVK) and 191–200 (EPQNSNTIIS). The segment at 241–263 (HICKYCERGFARPNDLFRHVKCH) adopts a C2H2-type zinc-finger fold.

It localises to the nucleus. Its function is as follows. Probable transcription factor involved in response to cell wall damage. This Candida albicans (strain SC5314 / ATCC MYA-2876) (Yeast) protein is Transcriptional regulator STP4 (STP4).